Consider the following 145-residue polypeptide: Ubiquitin-conjugating enzyme E2 variant 1C (145 aa).

A UBC core domain is found at 12–145 (PRNFRLLEEL…LVQPPEGTFF (134 aa)).

The protein belongs to the ubiquitin-conjugating enzyme family. As to quaternary structure, heterodimer with UBC35 or UBC36. In terms of tissue distribution, expressed in roots, shoots, leaves, stems and flowers, but not in pollen.

Has no ubiquitin ligase activity on its own. The heterodimer with UBC catalyzes the synthesis of non-canonical poly-ubiquitin chains that are linked through 'Lys-63'. This type of poly-ubiquitination does not lead to protein degradation by the proteasome. Mediates transcriptional activation of target genes. May play a role in the control of progress through the cell cycle and differentiation. May play a role in the error-free DNA repair pathway and contributes to the survival of cells after DNA damage. In Arabidopsis thaliana (Mouse-ear cress), this protein is Ubiquitin-conjugating enzyme E2 variant 1C (UEV1C).